Reading from the N-terminus, the 566-residue chain is Beta,beta-carotene 15,15'-dioxygenase (566 aa).

The Fe cation site is built by H172, H237, H308, and H514. The disordered stretch occupies residues 530-566 (PAETQEVENSDHPTDPTAPELSHSENDFTAGHGGSSL).

It belongs to the carotenoid oxygenase family. It depends on Fe(2+) as a cofactor. Expressed in liver, kidney, small intestine and testis.

It localises to the cytoplasm. Its subcellular location is the cytosol. It carries out the reaction all-trans-beta-carotene + O2 = 2 all-trans-retinal. It functions in the pathway cofactor metabolism; retinol metabolism. Its function is as follows. Symmetrically cleaves beta-carotene into two molecules of retinal using a dioxygenase mechanism. The protein is Beta,beta-carotene 15,15'-dioxygenase of Mus musculus (Mouse).